The sequence spans 241 residues: 1-(5-phosphoribosyl)-5-[(5-phosphoribosylamino)methylideneamino] imidazole-4-carboxamide isomerase (241 aa).

Aspartate 8 acts as the Proton acceptor in catalysis. The active-site Proton donor is aspartate 129.

It belongs to the HisA/HisF family.

It localises to the cytoplasm. The catalysed reaction is 1-(5-phospho-beta-D-ribosyl)-5-[(5-phospho-beta-D-ribosylamino)methylideneamino]imidazole-4-carboxamide = 5-[(5-phospho-1-deoxy-D-ribulos-1-ylimino)methylamino]-1-(5-phospho-beta-D-ribosyl)imidazole-4-carboxamide. It participates in amino-acid biosynthesis; L-histidine biosynthesis; L-histidine from 5-phospho-alpha-D-ribose 1-diphosphate: step 4/9. The polypeptide is 1-(5-phosphoribosyl)-5-[(5-phosphoribosylamino)methylideneamino] imidazole-4-carboxamide isomerase (Novosphingobium aromaticivorans (strain ATCC 700278 / DSM 12444 / CCUG 56034 / CIP 105152 / NBRC 16084 / F199)).